The primary structure comprises 360 residues: G-protein coupled receptor 15 (360 aa).

Over 1 to 33 the chain is Extracellular; sequence MDPEETSVYLDYYYATSPNPDIRETHSHVPYTS. Residues 34–54 form a helical membrane-spanning segment; sequence VFLPVFYTAVFLTGVLGNLVL. Topologically, residues 55–69 are cytoplasmic; sequence MGALHFKPGSRRLID. A helical membrane pass occupies residues 70–90; sequence IFIINLAASDFIFLVTLPLWV. The Extracellular portion of the chain corresponds to 91–120; it reads DKEASLGLWRTGSFLCKGSSYMISVNMHCS. The helical transmembrane segment at 121–141 threads the bilayer; that stretch reads VFLLTCMSVDRYLAIVCPVVS. Residues 142 to 149 are Cytoplasmic-facing; it reads RKFRRTDC. Residues 150 to 170 traverse the membrane as a helical segment; it reads AYVVCASIWFISCLLGLPTLL. Over 171-192 the chain is Extracellular; it reads SRELTLIDDKPYCAEKKATPLK. The helical transmembrane segment at 193-213 threads the bilayer; that stretch reads LIWSLVALIFTFFVPLLSIVT. Residues 214-239 lie on the Cytoplasmic side of the membrane; it reads CYCCIARKLCAHYQQSGKHNKKLKKS. The helical transmembrane segment at 240 to 260 threads the bilayer; it reads IKIIFIVVAAFLVSWLPFNTS. The Extracellular portion of the chain corresponds to 261-284; the sequence is KLLAIVSGLQQERYFPSAILQLGM. A helical membrane pass occupies residues 285 to 305; the sequence is EVSGPLAFANSCVNPFIYYIF. The Cytoplasmic segment spans residues 306 to 360; that stretch reads DSYIRRAIVHCLCPCLKNYDFGSSTETSDSHLTKALSTFIHAEDFTRRRKRSVSL. Phosphoserine is present on S359.

The protein belongs to the G-protein coupled receptor 1 family. As to quaternary structure, interacts with adapter YWHAE; this interaction promotes ER-to-Golgi transport of GPR15. In terms of processing, phosphorylation is necessary for YWHAE binding and efficient surface expression. O-glycosylated. Sialylated O-glycans in the N-terminal tail inhibits binding of GPR15LG. Post-translationally, sulfation is required for efficient binding of GPR15LG.

Its subcellular location is the cell membrane. G protein-coupled receptor that plays an important role in immune homeostasis. Acts via its natural ligand GPR15LG, a chemokine-like polypeptide strongly expressed in gastrointestinal tissues. GPR15-GPR15LG signaling axis regulates intestinal homeostasis and inflammation through the migration of immune cells. Controls thereby the specific homing of T-cells, particularly FOXP3+ regulatory T-cells (Tregs), to the large intestine lamina propria. Also required for skin localization of thymus-derived dendritic epidermal T-cells. Plays an important role in mediating cytoprotective function as well as angiogenesis of thrombomodulin. Mechanistically, preferentially signals through the Gi/o pathway to inhibit adenylate cyclase activity and activate a phosphatidylinositol-calcium second messenger system that regulates the release of Ca(2+) ions from intracellular stores. The protein is G-protein coupled receptor 15 (GPR15) of Macaca nemestrina (Pig-tailed macaque).